Reading from the N-terminus, the 505-residue chain is ATP synthase subunit alpha (505 aa).

Residue 171–178 participates in ATP binding; sequence GDRQTGKT.

Belongs to the ATPase alpha/beta chains family. As to quaternary structure, F-type ATPases have 2 components, CF(1) - the catalytic core - and CF(0) - the membrane proton channel. CF(1) has five subunits: alpha(3), beta(3), gamma(1), delta(1), epsilon(1). CF(0) has three main subunits: a(1), b(2) and c(9-12). The alpha and beta chains form an alternating ring which encloses part of the gamma chain. CF(1) is attached to CF(0) by a central stalk formed by the gamma and epsilon chains, while a peripheral stalk is formed by the delta and b chains.

Its subcellular location is the cell inner membrane. It carries out the reaction ATP + H2O + 4 H(+)(in) = ADP + phosphate + 5 H(+)(out). In terms of biological role, produces ATP from ADP in the presence of a proton gradient across the membrane. The alpha chain is a regulatory subunit. In Campylobacter curvus (strain 525.92), this protein is ATP synthase subunit alpha.